Here is a 162-residue protein sequence, read N- to C-terminus: MLHALQWRKYMAEENNNEELRHLVRIMNTDLKGAKPVEYALTGLPGIGRRTAILIAKGAGVDPTATLGYLPDEEVAKLDAAIGKFEEIVPSWMLNRQKDLTTGQDKHLLGTDILLTFREDINNLKKVRAYRGLRHERGLKVRGQRTKSTGRRGSTVGVSRKK.

Positions 142–162 are disordered; the sequence is RGQRTKSTGRRGSTVGVSRKK.

This sequence belongs to the universal ribosomal protein uS13 family. As to quaternary structure, part of the 30S ribosomal subunit. Forms a loose heterodimer with protein S19. Forms two bridges to the 50S subunit in the 70S ribosome.

Functionally, located at the top of the head of the 30S subunit, it contacts several helices of the 16S rRNA. In the 70S ribosome it contacts the 23S rRNA (bridge B1a) and protein L5 of the 50S subunit (bridge B1b), connecting the 2 subunits; these bridges are implicated in subunit movement. The polypeptide is Small ribosomal subunit protein uS13 (Methanosarcina mazei (strain ATCC BAA-159 / DSM 3647 / Goe1 / Go1 / JCM 11833 / OCM 88) (Methanosarcina frisia)).